A 94-amino-acid chain; its full sequence is uncharacterized protein (94 aa).

Positions 1 to 23 (MVLLAGTRPQGGEARCMIPPPPS) are disordered.

This is an uncharacterized protein from Homo sapiens (Human).